The following is a 115-amino-acid chain: NADH-ubiquinone oxidoreductase chain 3 (115 aa).

Transmembrane regions (helical) follow at residues 3–23 (LMLA…IMFW), 55–75 (FFLV…LLSL), and 84–104 (LPTM…SLAY).

It belongs to the complex I subunit 3 family. As to quaternary structure, core subunit of respiratory chain NADH dehydrogenase (Complex I) which is composed of 45 different subunits. Interacts with TMEM186. Interacts with TMEM242.

Its subcellular location is the mitochondrion inner membrane. The enzyme catalyses a ubiquinone + NADH + 5 H(+)(in) = a ubiquinol + NAD(+) + 4 H(+)(out). Core subunit of the mitochondrial membrane respiratory chain NADH dehydrogenase (Complex I) which catalyzes electron transfer from NADH through the respiratory chain, using ubiquinone as an electron acceptor. Essential for the catalytic activity of complex I. The chain is NADH-ubiquinone oxidoreductase chain 3 from Papio hamadryas (Hamadryas baboon).